The primary structure comprises 150 residues: Suppressor of HU sensitivity involved in recombination protein 1 (150 aa).

In terms of assembly, component of the SHU complex composed of at least CSM2, PSY3, SHU1 and SHU2.

The protein resides in the nucleus. Functionally, plays a role in a RAD51/RAD54-dependent homologous recombination repair (HRR) pathway to repair MMS-induced lesions during S-phase. The protein is Suppressor of HU sensitivity involved in recombination protein 1 (SHU1) of Saccharomyces cerevisiae (strain ATCC 204508 / S288c) (Baker's yeast).